An 830-amino-acid chain; its full sequence is MGVQLKLDPNSKNWLRQPDQQPIQDSICTLPGPGSLLKKKIRKTEFRIDNGLLGNTSPIINVESKIPFHRRANSTPEESRKRVSFSLTSNDGAKSDRSSQKSSNSRKSIRSQSRSRSSSVGSDSQASIQSGTNSEVVSDDEEDGNFASIPELHEDNEYHSNLATSSNPFSDGSSSKSASLTASSAAASPTVSFSPASTSENLTPTSSKSLASNTSLVQSFNSASRSSSISGNQYTYNLLGKSTDESPKITISAGTSMSHFPSASSKLIQMRRHAHMNSEKCDPELLSHNEYFPMMKRGFISRFLCLFVSRDANVYIGPLESSHAKPYRPFGSFVSRFTNRVASDLESQIPDALEAVLTQNNDYDFNSFLHNMGYSRCYVDENYHITIHVSSYERRVEFMLAVCEAMMLYGSPSHKIQQSLRIASRILQLPATFLYLPDCMFVYFKKLEQYSPDVFVVRVTSQTDLNRMVLVNEIFRRVMRDKLSAEDGTEVLRNITSFRPLYRDWLVAFMHGVASASILPVVYGGGWRDMLIGFVLGLLLGIFRVYINPRFFLFDSLFEVIISIILSFLGRAFGSISRYDKPVFCFAALVEGAITLILPGYVVFCGVLELQSKNIVAGGVRMLYAVIFSLFLSFGITIGSALYGWMDKDATDADTCMSIIAVSPYWYILLIPIFTLSLLIVTQSHPRQWPIQMFVACCGYVVYYFSSLHFGASQISSAIGSFAVGCLGNMYSHFIKSSSFAVVLPAIFVLVPSGFAAQGGVSAGLDTASQITSKNTTTNTTTVTTENSQNSSLEFGFTMVEIAIGIAIGFLASSLTVYPFFGYRRKNMML.

3 disordered regions span residues 1-28 (MGVQ…DSIC), 70-147 (RRAN…GNFA), and 186-210 (AASP…SKSL). Residues 10–27 (NSKNWLRQPDQQPIQDSI) show a composition bias toward polar residues. Low complexity-rich tracts occupy residues 100–130 (QKSS…SIQS) and 186–199 (AASP…ASTS). Polar residues predominate over residues 200–210 (ENLTPTSSKSL). 10 consecutive transmembrane segments (helical) span residues 505 to 525 (WLVA…VYGG), 529 to 549 (DMLI…YINP), 551 to 571 (FFLF…FLGR), 584 to 604 (FCFA…YVVF), 622 to 642 (MLYA…GSAL), 659 to 679 (IIAV…LSLL), 691 to 711 (IQMF…LHFG), 715 to 735 (ISSA…SHFI), 740 to 760 (FAVV…AQGG), and 802 to 822 (IAIG…PFFG).

Belongs to the ThrE exporter (TC 2.A.79) family.

The protein resides in the cell membrane. Its subcellular location is the cell tip. This is an uncharacterized protein from Schizosaccharomyces pombe (strain 972 / ATCC 24843) (Fission yeast).